The following is a 204-amino-acid chain: Peptidyl-tRNA hydrolase (204 aa).

Tyr14 contacts tRNA. His19 serves as the catalytic Proton acceptor. Tyr64, Asn66, and Asn112 together coordinate tRNA.

The protein belongs to the PTH family. Monomer.

Its subcellular location is the cytoplasm. The enzyme catalyses an N-acyl-L-alpha-aminoacyl-tRNA + H2O = an N-acyl-L-amino acid + a tRNA + H(+). Its function is as follows. Hydrolyzes ribosome-free peptidyl-tRNAs (with 1 or more amino acids incorporated), which drop off the ribosome during protein synthesis, or as a result of ribosome stalling. Catalyzes the release of premature peptidyl moieties from peptidyl-tRNA molecules trapped in stalled 50S ribosomal subunits, and thus maintains levels of free tRNAs and 50S ribosomes. The sequence is that of Peptidyl-tRNA hydrolase from Nitrobacter hamburgensis (strain DSM 10229 / NCIMB 13809 / X14).